A 771-amino-acid polypeptide reads, in one-letter code: MASKSDKQVTVEVNNNGRSRSKSRARSQSRGRGRSVKITVNSNNKGRRQNGRNKYQSNQRVRKIVNKQLRKQGVTGPKPAICQTATATLGTIGSNTTGATEIEACILLNPVLVKDATGSTQFGPVQALGAQYSMWKLKYLNVRLTSMVGASAVDGTVVRISLNPTSTPSSTSWSGLGARKHLDVTVGKNAVFKLKPSDLGGPRDGWWLTNTNDNASDTLGPSIEIHTLGQTMSSYQNTQFTGGLFLVGLSSAWCFTGYAANPNLVNLVKSTDKSVDVTFEGSAGTPLIMNVPEHSHFARMAVEHSSLSTTLSRAGGESSSDTVWQVLNTAVSAAELVTPPPFNWLVKGGWWFVKLIAGRARTGARRFYVYPSYQDALSNKPALCTGGVSTYTRQSNPVRTTLQFTQMNQPSLGRGATPATLGRSIPEPGDQFKVIMTVGALVQPNRSDTQNWLFKTVTPPTGHDAARVGWNTQHYLTIQGFLLIDSLEWLTPNLQESQEPPLIPELGVYIGIHKKALVYFMQQYVNPHTNNKHQVSSIFLIKPTENFSVTNYMSYFFRESQSDQNVANLKIRPQTWQQTVNFQRGKWYLVTNTAIRNGPPPSGWVWDNIELTNESIYYADQVLAHFINPPPQNSKIYFEVHTTMPQSRARSIGLEEDQTDNWQEPDEDLQTSTEESDYETDSLEDESDDEDSNTCRELVINTLVNQGISRERATYIGMSAYPNVEWGSGEQSTSQHIQEISSDDVGAGAHYSCVCERKQQSLNQGSRGHAE.

Residues 1-59 are disordered; the sequence is MASKSDKQVTVEVNNNGRSRSKSRARSQSRGRGRSVKITVNSNNKGRRQNGRNKYQSNQ. The segment at 1–70 is basic; sequence MASKSDKQVT…VRKIVNKQLR (70 aa). Residues 19-35 show a composition bias toward basic residues; sequence SRSKSRARSQSRGRGRS. Residues 71–263 are inner core; that stretch reads KQGVTGPKPA…CFTGYAANPN (193 aa). The tract at residues 394-423 is core attachment; that stretch reads QSNPVRTTLQFTQMNQPSLGRGATPATLGR. Residues 424 to 648 are P2 globular domain; that stretch reads SIPEPGDQFK…EVHTTMPQSR (225 aa). The interval 649–771 is acidic; the sequence is ARSIGLEEDQ…LNQGSRGHAE (123 aa). Positions 653-694 are disordered; sequence GLEEDQTDNWQEPDEDLQTSTEESDYETDSLEDESDDEDSNT. Residues 654–692 are compositionally biased toward acidic residues; that stretch reads LEEDQTDNWQEPDEDLQTSTEESDYETDSLEDESDDEDS.

Belongs to the astroviridae capsid polyprotein family. As to quaternary structure, heterodimer with spike protein VP27. The spikes form a globular dimer with 30 spikes covering the mature virion. Spike protein VP25 that lacks the core attachment region may need to dimerize with spike protein VP27 to remain stably bound to the viral particle. In terms of assembly, heterodimer with spike protein VP25. The spikes form a globular dimer with 30 spikes covering the mature virion. Spike protein VP25 that lacks the core attachment region may need to dimerize with spike protein VP27 to remain stably bound to the viral particle. Post-translationally, specific enzymatic cleavages by the host yield mature proteins. VP90 acidic C-terminal domain is eliminated from the immature virion by host caspases during viral maturation giving rise to virions composed of VP70. The virus can then dissociate from cellular membranes and exit the cell. Further cleavages by host extracellular proteases occur resulting in the three structural proteins VP34, VP27 and VP25 and conferring infectivity.

The protein resides in the virion. Its subcellular location is the host extracellular space. Functionally, the capsid polyprotein VP90 self-assembles and undergoes a proteolytic cleavage by host caspases to yield the immature VP70 virion. The immature virion is composed of 180 VP70 subunits with 90 dimeric spikes and displays a T=3 icosahedral symmetry. During maturation, VP70 undergoes a loss of 60 peripentonal spikes, which likely plays an important role in viral infectivity. Its function is as follows. Self-assembles to form an icosahedral capsid with a T=3 symmetry, about 43 nm in diameter. This forms contains only 30 spikes located on the icosahedral 2-fold axes. In terms of biological role, VP25 and VP27 Forms the spikes at the surface of the virion. This forms contains only 30 spikes located on the icosahedral 2-fold axes. Plays a role in the attachment to target host cell. This attachment induces virion internalization through clathrin-dependent endocytosis. The sequence is that of Capsid polyprotein VP90 from Human astrovirus-4 (HAstV-4).